We begin with the raw amino-acid sequence, 333 residues long: Fibronectin type III domain-containing protein 11 (333 aa).

A Fibronectin type-III domain is found at 212–310 (PVMFDRKESV…DSLTLHTRPG (99 aa)). The segment at 307-333 (TRPGPPEGLAPSRLGKLGLSLTTPSER) is disordered.

The chain is Fibronectin type III domain-containing protein 11 from Bos taurus (Bovine).